A 279-amino-acid chain; its full sequence is MNIKIAKNAGFCFGVKRAMKMAWDEVEKNDSGIYALGPLIHNKQAVAKYEEKGLKTVNEIDTIPNHENMIIRSHGVPENIYKEAKDKKLKIVDTTCPFVKKIHTVVSEYHNKGYEIIVIGDMKHPEVIGINGWCENSAIIIKTLEQMENMEFDNSKRYCLVAQTTINPELYISIVNKLSDKLEEIVFNDTICSATKTRQESAKELAKEVDCMIVIGGKHSSNTQKLVKVCEDLVPTFAIETKDELDVNTLKKYKNLGITAGASTPNWIIEEVVTFLENL.

Cysteine 12 is a binding site for [4Fe-4S] cluster. (2E)-4-hydroxy-3-methylbut-2-enyl diphosphate is bound by residues histidine 41 and histidine 74. The dimethylallyl diphosphate site is built by histidine 41 and histidine 74. Residues histidine 41 and histidine 74 each coordinate isopentenyl diphosphate. Cysteine 96 serves as a coordination point for [4Fe-4S] cluster. Histidine 124 lines the (2E)-4-hydroxy-3-methylbut-2-enyl diphosphate pocket. Histidine 124 contributes to the dimethylallyl diphosphate binding site. Residue histidine 124 participates in isopentenyl diphosphate binding. Glutamate 126 functions as the Proton donor in the catalytic mechanism. Residue threonine 164 participates in (2E)-4-hydroxy-3-methylbut-2-enyl diphosphate binding. Cysteine 192 provides a ligand contact to [4Fe-4S] cluster. Serine 220, serine 221, asparagine 222, and serine 263 together coordinate (2E)-4-hydroxy-3-methylbut-2-enyl diphosphate. Residues serine 220, serine 221, asparagine 222, and serine 263 each contribute to the dimethylallyl diphosphate site. Positions 220, 221, 222, and 263 each coordinate isopentenyl diphosphate.

The protein belongs to the IspH family. [4Fe-4S] cluster is required as a cofactor.

It catalyses the reaction isopentenyl diphosphate + 2 oxidized [2Fe-2S]-[ferredoxin] + H2O = (2E)-4-hydroxy-3-methylbut-2-enyl diphosphate + 2 reduced [2Fe-2S]-[ferredoxin] + 2 H(+). It carries out the reaction dimethylallyl diphosphate + 2 oxidized [2Fe-2S]-[ferredoxin] + H2O = (2E)-4-hydroxy-3-methylbut-2-enyl diphosphate + 2 reduced [2Fe-2S]-[ferredoxin] + 2 H(+). The protein operates within isoprenoid biosynthesis; dimethylallyl diphosphate biosynthesis; dimethylallyl diphosphate from (2E)-4-hydroxy-3-methylbutenyl diphosphate: step 1/1. It functions in the pathway isoprenoid biosynthesis; isopentenyl diphosphate biosynthesis via DXP pathway; isopentenyl diphosphate from 1-deoxy-D-xylulose 5-phosphate: step 6/6. Functionally, catalyzes the conversion of 1-hydroxy-2-methyl-2-(E)-butenyl 4-diphosphate (HMBPP) into a mixture of isopentenyl diphosphate (IPP) and dimethylallyl diphosphate (DMAPP). Acts in the terminal step of the DOXP/MEP pathway for isoprenoid precursor biosynthesis. This is 4-hydroxy-3-methylbut-2-enyl diphosphate reductase from Clostridioides difficile (strain 630) (Peptoclostridium difficile).